A 218-amino-acid chain; its full sequence is Glutathione S-transferase U22 (218 aa).

Alanine 2 is modified (N-acetylalanine). The region spanning 3–82 (DEVILLDFWP…YIDEVWSDKN (80 aa)) is the GST N-terminal domain. Glutathione contacts are provided by residues 13-14 (SP), 39-40 (DK), 53-54 (KI), and 66-67 (ES). In terms of domain architecture, GST C-terminal spans 88 to 208 (DPYQRAQARF…LHDSEKILAF (121 aa)). Threonine 149 bears the Phosphothreonine mark.

The protein belongs to the GST superfamily. Tau family.

Its subcellular location is the cytoplasm. It localises to the cytosol. The enzyme catalyses RX + glutathione = an S-substituted glutathione + a halide anion + H(+). Functionally, may be involved in the conjugation of reduced glutathione to a wide number of exogenous and endogenous hydrophobic electrophiles and have a detoxification role against certain herbicides. This is Glutathione S-transferase U22 (GSTU22) from Arabidopsis thaliana (Mouse-ear cress).